The chain runs to 285 residues: Hydroxyacylglutathione hydrolase, mitochondrial (285 aa).

The N-terminal 10 residues, 1–10, are a transit peptide targeting the mitochondrion; the sequence is MKFLLQQIRN. Residues histidine 69, histidine 71, aspartate 73, histidine 74, histidine 131, aspartate 154, and histidine 198 each contribute to the Zn(2+) site.

Zn(2+) is required as a cofactor.

The protein resides in the mitochondrion matrix. The enzyme catalyses an S-(2-hydroxyacyl)glutathione + H2O = a 2-hydroxy carboxylate + glutathione + H(+). The catalysed reaction is (R)-S-lactoylglutathione + H2O = (R)-lactate + glutathione + H(+). The protein operates within secondary metabolite metabolism; methylglyoxal degradation; (R)-lactate from methylglyoxal: step 2/2. Inhibited by various thiol compounds such as glutathione and coenzyme A. Its function is as follows. Thiolesterase that catalyzes the hydrolysis of S-D-lactoylglutathione to form glutathione and D-lactic acid. Involved in the metabolism of methylglyoxal, a toxic compound for yeast proliferation, by converting methylglyoxal to lactate via S-D-lactoylglutathione by sequential enzyme reactions catalyzed by glyoxalase I and glyoxalase II. The polypeptide is Hydroxyacylglutathione hydrolase, mitochondrial (Saccharomyces cerevisiae (strain ATCC 204508 / S288c) (Baker's yeast)).